We begin with the raw amino-acid sequence, 335 residues long: Lipase chaperone (335 aa).

The chain crosses the membrane as a helical span at residues 1–21 (MSGSILLLPLAIALGLGFFIA).

It belongs to the lipase chaperone family.

Its subcellular location is the cell inner membrane. May be involved in the folding of the extracellular lipase during its passage through the periplasm. This is Lipase chaperone from Stutzerimonas stutzeri (strain A1501) (Pseudomonas stutzeri).